Here is a 459-residue protein sequence, read N- to C-terminus: ATP-dependent protease ATPase subunit HslU (459 aa).

ATP contacts are provided by residues Val-26, 68–73, Asp-271, Glu-337, and Arg-409; that span reads GVGKTE.

It belongs to the ClpX chaperone family. HslU subfamily. In terms of assembly, a double ring-shaped homohexamer of HslV is capped on each side by a ring-shaped HslU homohexamer. The assembly of the HslU/HslV complex is dependent on binding of ATP.

Its subcellular location is the cytoplasm. In terms of biological role, ATPase subunit of a proteasome-like degradation complex; this subunit has chaperone activity. The binding of ATP and its subsequent hydrolysis by HslU are essential for unfolding of protein substrates subsequently hydrolyzed by HslV. HslU recognizes the N-terminal part of its protein substrates and unfolds these before they are guided to HslV for hydrolysis. The protein is ATP-dependent protease ATPase subunit HslU of Xylella fastidiosa (strain 9a5c).